The chain runs to 388 residues: UPF0496 protein 1 (388 aa).

A disordered region spans residues 1–25; sequence MGNSSSSGSHRPPRPASSESALPPA. A coiled-coil region spans residues 198–227; the sequence is QAVYRQQLTMLEKLQQRKHRLDKKVRAIKA. Transmembrane regions (helical) follow at residues 234-254 and 257-277; these read IIFATTFAAVLICSVVAAAIA and PVAAALAAAASIPVGSMGKWI. A coiled-coil region spans residues 344–376; it reads VEEIKKKLEVFMKSVEDLGEQADRCSRDIRRAR.

The protein belongs to the UPF0496 family.

The protein resides in the membrane. This is UPF0496 protein 1 from Oryza sativa subsp. japonica (Rice).